A 600-amino-acid chain; its full sequence is Gamma-terpinene synthase, chloroplastic (600 aa).

Residues 1–40 constitute a chloroplast transit peptide; sequence MALNLLSSLPAACNFTRLSLPLSSKVNGFVPPITQVQYPM. Mg(2+)-binding residues include D353, D357, D498, and E506. A DDXXD motif motif is present at residues 353–357; that stretch reads DDVYD.

Belongs to the terpene synthase family. Mn(2+) serves as cofactor. It depends on Mg(2+) as a cofactor.

It localises to the plastid. The protein resides in the chloroplast. It catalyses the reaction (2E)-geranyl diphosphate = gamma-terpinene + diphosphate. Its pathway is secondary metabolite biosynthesis; terpenoid biosynthesis. With respect to regulation, inhibited by 100 mM KCl. Its function is as follows. Monoterpene synthase which catalyzes the conversion of geranyl diphosphate to gamma-terpinene and the minor products limonene, alpha-pinene, beta-pinene, alpha-terpinolene, alpha-thujene, alpha-terpinene, myrcene and sabinene. The sequence is that of Gamma-terpinene synthase, chloroplastic from Citrus limon (Lemon).